Consider the following 300-residue polypeptide: Tumor necrosis factor receptor superfamily member 6B (300 aa).

A signal peptide spans 1 to 29 (MRALEGPGLSLLCLVLALPALLPVPAVRG). TNFR-Cys repeat units follow at residues 31-70 (AETP…PTTC), 72-113 (PCPP…NRAC), 115-150 (CRTG…NTQC), and 152-193 (PCPP…DTLC). Disulfide bonds link cysteine 49–cysteine 62, cysteine 52–cysteine 70, cysteine 73–cysteine 88, cysteine 91–cysteine 105, cysteine 95–cysteine 113, cysteine 115–cysteine 126, cysteine 132–cysteine 150, and cysteine 153–cysteine 168. Residue asparagine 173 is glycosylated (N-linked (GlcNAc...) asparagine). A disulfide bridge links cysteine 174 with cysteine 193.

In terms of tissue distribution, detected in fetal lung, brain and liver. Detected in adult stomach, spinal cord, lymph node, trachea, spleen, colon and lung. Highly expressed in several primary tumors from colon, stomach, rectum, esophagus and in SW480 colon carcinoma cells.

It localises to the secreted. Decoy receptor that can neutralize the cytotoxic ligands TNFS14/LIGHT, TNFSF15 and TNFSF6/FASL. Protects against apoptosis. The polypeptide is Tumor necrosis factor receptor superfamily member 6B (TNFRSF6B) (Homo sapiens (Human)).